The chain runs to 234 residues: 2,3,4,5-tetrahydropyridine-2,6-dicarboxylate N-acetyltransferase (234 aa).

This sequence belongs to the transferase hexapeptide repeat family. DapH subfamily.

It carries out the reaction (S)-2,3,4,5-tetrahydrodipicolinate + acetyl-CoA + H2O = L-2-acetamido-6-oxoheptanedioate + CoA. It functions in the pathway amino-acid biosynthesis; L-lysine biosynthesis via DAP pathway; LL-2,6-diaminopimelate from (S)-tetrahydrodipicolinate (acetylase route): step 1/3. Its function is as follows. Catalyzes the transfer of an acetyl group from acetyl-CoA to tetrahydrodipicolinate. The protein is 2,3,4,5-tetrahydropyridine-2,6-dicarboxylate N-acetyltransferase of Leuconostoc citreum (strain KM20).